Here is a 523-residue protein sequence, read N- to C-terminus: Probable aminopeptidase NPEPL1 (523 aa).

Residues Lys260 and Asp265 each coordinate Zn(2+). The active site involves Lys272. The Zn(2+) site is built by Asp283, Asp342, and Glu344. The active site involves Arg346.

This sequence belongs to the peptidase M17 family. It depends on Zn(2+) as a cofactor. Mn(2+) is required as a cofactor. Ubiquitously expressed.

Its function is as follows. Probably catalyzes the removal of unsubstituted N-terminal amino acids from various peptides. This Homo sapiens (Human) protein is Probable aminopeptidase NPEPL1 (NPEPL1).